Consider the following 582-residue polypeptide: Vesicular glutamate transporter 2 (582 aa).

At 1–71 (MESVKQRILA…CTCFGLPRRY (71 aa)) the chain is on the cytoplasmic side. The chain crosses the membrane as a helical span at residues 72–92 (IIAIMSGLGFCISFGIRCNLG). At 93–125 (VAIVDMVNNSTIHRGGKVIKEKAKFNWDPETVG) the chain is on the vesicular side. N-linked (GlcNAc...) asparagine glycosylation is found at Asn100 and Asn101. The chain crosses the membrane as a helical span at residues 126–146 (MIHGSFFWGYIITQIPGGYIA). The Cytoplasmic portion of the chain corresponds to 147–148 (SR). The chain crosses the membrane as a helical span at residues 149–169 (LAANRVFGAAILLTSTLNMLI). Topologically, residues 170–177 (PSAARVHY) are vesicular. A helical membrane pass occupies residues 178 to 198 (GCVIFVRILQGLVEGVTYPAC). The Cytoplasmic segment spans residues 199–216 (HGIWSKWAPPLERSRLAT). A helical membrane pass occupies residues 217-237 (TSFCGSYAGAVIAMPLAGILV). At 238–244 (QYTGWSS) the chain is on the vesicular side. Residues 245–265 (VFYVYGSFGMVWYMFWLLVSY) traverse the membrane as a helical segment. Over 266 to 310 (ESPAKHPTITDEERRYIEESIGESANLLGAMEKFKTPWRKFFTSM) the chain is Cytoplasmic. A helical transmembrane segment spans residues 311–331 (PVYAIIVANFCRSWTFYLLLI). The Vesicular portion of the chain corresponds to 332–349 (SQPAYFEEVFGFEISKVG). The helical transmembrane segment at 350-370 (MLSAVPHLVMTIIVPIGGQIA) threads the bilayer. Residues 371–386 (DFLRSKQILSTTTVRK) lie on the Cytoplasmic side of the membrane. The chain crosses the membrane as a helical span at residues 387–407 (IMNCGGFGMEATLLLVVGYSH). At 408–409 (TR) the chain is on the vesicular side. The chain crosses the membrane as a helical span at residues 410-430 (GVAISFLVLAVGFSGFAISGF). Residues 431–443 (NVNHLDIAPRYAS) are Cytoplasmic-facing. The chain crosses the membrane as a helical span at residues 444 to 464 (ILMGISNGVGTLSGMVCPIIV). Residues 465-477 (GAMTKNKSREEWQ) lie on the Vesicular side of the membrane. The N-linked (GlcNAc...) asparagine glycan is linked to Asn470. The helical transmembrane segment at 478 to 498 (YVFLIAALVHYGGVIFYAIFA) threads the bilayer. The Cytoplasmic segment spans residues 499–582 (SGEKQPWADP…HSYKDRVDYS (84 aa)).

The protein belongs to the major facilitator superfamily. Sodium/anion cotransporter family. VGLUT subfamily. In terms of tissue distribution, predominantly expressed in adult brain. Expressed in amygdala, caudate nucleus, cerebral cortex, frontal lobe, hippocampus, medulla, occipital lobe, putamen, spinal cord, substantia nigra, subthalamic nucleus, temporal lobe and thalamus.

It localises to the cytoplasmic vesicle. Its subcellular location is the secretory vesicle. The protein resides in the synaptic vesicle membrane. It is found in the synapse. The protein localises to the synaptosome. It localises to the cell membrane. It carries out the reaction L-glutamate(out) = L-glutamate(in). The enzyme catalyses 3 Na(+)(out) + phosphate(out) = 3 Na(+)(in) + phosphate(in). The catalysed reaction is phosphate(in) = phosphate(out). It catalyses the reaction K(+)(in) + H(+)(out) = K(+)(out) + H(+)(in). It carries out the reaction chloride(in) = chloride(out). With respect to regulation, chloride channel activity is allosterically activated by lumenal H(+) and Cl(-) leading to synaptic vesicles acidification. The L-glutamate transport activity is allosterically activated by lumenal H(+) and Cl(-). The allosteric requirement for H(+) efficiently prevents non-vesicular efflux across the plasma membrane. The L-glutamate uniporter activity exhibits a biphasic dependence on chloride concentration. In terms of biological role, multifunctional transporter that transports L-glutamate as well as multiple ions such as chloride, proton, potassium, sodium and phosphate. At the synaptic vesicle membrane, mainly functions as a uniporter which transports preferentially L-glutamate but also, phosphate from the cytoplasm into synaptic vesicles at presynaptic nerve terminals of excitatory neural cells. The L-glutamate or phosphate uniporter activity is electrogenic and is driven by the proton electrochemical gradient, mainly by the electrical gradient established by the vacuolar H(+)-ATPase across the synaptic vesicle membrane. In addition, functions as a chloride channel that allows the chloride permeation through the synaptic vesicle membrane therefore affects the proton electrochemical gradient and promotes synaptic vesicles acidification. Moreover, functions as a vesicular K(+)/H(+) antiport allowing to maintain the electrical gradient and to decrease chemical gradient and therefore sustain vesicular glutamate uptake. The vesicular H(+)/H(+) antiport activity is electroneutral. At the plasma membrane, following exocytosis, functions as a symporter of Na(+) and phosphate from the extracellular space to the cytoplasm allowing synaptic phosphate homeostasis regulation. The symporter activity is driven by an inside negative membrane potential and is electrogenic. Also involved in the regulation of retinal hyaloid vessel regression during postnatal development. May also play a role in the endocrine glutamatergic system of other tissues such as pineal gland and pancreas. In Homo sapiens (Human), this protein is Vesicular glutamate transporter 2.